Consider the following 73-residue polypeptide: GHAAANCALARVATALTRRVPASRHGLAEGGTPPWTLLLAVAAVTVLGVVAVSLLRRALRVRYRFARPAALRA.

Topologically, residues 1-34 are virion surface; sequence GHAAANCALARVATALTRRVPASRHGLAEGGTPP. Residues 35 to 55 traverse the membrane as a helical segment; sequence WTLLLAVAAVTVLGVVAVSLL. At 56–73 the chain is on the intravirion side; it reads RRALRVRYRFARPAALRA.

This sequence belongs to the chordopoxvirinae L1 protein family.

The protein resides in the virion membrane. In Capra hircus (Goat), this protein is Protein F9 homolog.